The sequence spans 619 residues: Chaperone protein HscA homolog (619 aa).

The protein belongs to the heat shock protein 70 family.

Functionally, chaperone involved in the maturation of iron-sulfur cluster-containing proteins. Has a low intrinsic ATPase activity which is markedly stimulated by HscB. This is Chaperone protein HscA homolog from Azotobacter vinelandii.